The sequence spans 229 residues: Protein rep (229 aa).

Residue Y214 coordinates DNA.

The protein belongs to the Gram-positive plasmids replication protein type 1 family.

Its function is as follows. Produces a single-strand nick in a specific site of the plasmid, and this nick results in single-strand replication by rolling circle mechanism. This chain is Protein rep, found in Staphylococcus aureus.